The primary structure comprises 121 residues: Small ribosomal subunit protein uS13 (121 aa).

The disordered stretch occupies residues Met89–Lys121.

Belongs to the universal ribosomal protein uS13 family. Part of the 30S ribosomal subunit. Forms a loose heterodimer with protein S19. Forms two bridges to the 50S subunit in the 70S ribosome.

Its function is as follows. Located at the top of the head of the 30S subunit, it contacts several helices of the 16S rRNA. In the 70S ribosome it contacts the 23S rRNA (bridge B1a) and protein L5 of the 50S subunit (bridge B1b), connecting the 2 subunits; these bridges are implicated in subunit movement. Contacts the tRNAs in the A and P-sites. The sequence is that of Small ribosomal subunit protein uS13 from Pediococcus pentosaceus (strain ATCC 25745 / CCUG 21536 / LMG 10740 / 183-1w).